A 155-amino-acid polypeptide reads, in one-letter code: Endoribonuclease YbeY (155 aa).

Residues H110, H114, and H120 each contribute to the Zn(2+) site.

It belongs to the endoribonuclease YbeY family. Zn(2+) is required as a cofactor.

It localises to the cytoplasm. Single strand-specific metallo-endoribonuclease involved in late-stage 70S ribosome quality control and in maturation of the 3' terminus of the 16S rRNA. This Deinococcus geothermalis (strain DSM 11300 / CIP 105573 / AG-3a) protein is Endoribonuclease YbeY.